We begin with the raw amino-acid sequence, 106 residues long: Large ribosomal subunit protein eL30 (106 aa).

The protein belongs to the eukaryotic ribosomal protein eL30 family.

The chain is Large ribosomal subunit protein eL30 from Methanococcus maripaludis (strain C7 / ATCC BAA-1331).